A 588-amino-acid chain; its full sequence is Adenine deaminase (588 aa).

This sequence belongs to the metallo-dependent hydrolases superfamily. Adenine deaminase family. As to quaternary structure, homodimer. Mn(2+) serves as cofactor.

It carries out the reaction adenine + H2O + H(+) = hypoxanthine + NH4(+). The protein is Adenine deaminase of Escherichia coli O6:H1 (strain CFT073 / ATCC 700928 / UPEC).